The primary structure comprises 449 residues: Asparagine--tRNA ligase (449 aa).

It belongs to the class-II aminoacyl-tRNA synthetase family. Homodimer.

Its subcellular location is the cytoplasm. The catalysed reaction is tRNA(Asn) + L-asparagine + ATP = L-asparaginyl-tRNA(Asn) + AMP + diphosphate + H(+). This is Asparagine--tRNA ligase from Deinococcus geothermalis (strain DSM 11300 / CIP 105573 / AG-3a).